We begin with the raw amino-acid sequence, 1761 residues long: Probable serine/threonine-protein kinase DDB_G0282963 (1761 aa).

Disordered stretches follow at residues 18–47, 60–269, 322–458, 545–717, 749–783, 798–830, 842–956, 972–997, 1081–1151, 1179–1305, 1318–1343, and 1355–1459; these read PQQQQIPQQQEQQQQQQQQQQQQQQQQQQQ, QQQQ…SNKL, SISN…SDFN, QNSS…KSSQ, LKNSPFPPSSPILSPQTDDPNNNNNNNNSNTTISQ, AFYNSGSNNNNNNNNNNNNNNNNNNNNTNSTSA, TTQI…KSVF, NSHHHHNSGNNSSNSNNNNNDDEVPT, ITSA…CNVN, KNNC…PSKQ, ALDSTNNNNNNNNDTDSTSSNMGTPT, and QHSR…ECWK. Composition is skewed to low complexity over residues 19–47, 60–85, 92–105, and 112–237; these read QQQQIPQQQEQQQQQQQQQQQQQQQQQQQ, QQQQEQQNNNNNINDNINGNNNSNEI, NITNNNGTSIIISL, and ALNS…NNNN. A compositionally biased stretch (polar residues) spans 238–256; it reads KQMTPPTFKNNLQVKHQPQ. Low complexity-rich tracts occupy residues 257–269, 322–341, 348–451, and 546–572; these read SSSGGSIGGSNKL, SISNTTNETTTTTTTTTNTT, GSIG…NNGV, and NSSLNINNNNNSSNNNNINNNNNNNNI. Positions 573–582 are enriched in polar residues; the sequence is MAGSTSSVIY. Residues 591-627 show a composition bias toward low complexity; sequence NENNNNNINNDNTVCNINNNNNSNNNKSNNSNNSNNS. Residues 633–643 are compositionally biased toward acidic residues; the sequence is SSDEEPETDSD. Composition is skewed to low complexity over residues 674–697, 759–778, 805–824, 847–885, 902–956, 979–990, 1081–1149, and 1180–1262; these read NNTNTNTNTHNTYNNNKNNNNNNT, PILSPQTDDPNNNNNNNNSN, NNNNNNNNNNNNNNNNNNNN, TSDIDTSNSDNNNNNNNNNTSDNNFNDYNNDYNNDYNNY, TKMS…KSVF, SGNNSSNSNNNN, ITSA…CTCN, and NNCT…SNNN. Residues 1263 to 1273 are compositionally biased toward basic residues; it reads NHHHHHHHHHN. 4 stretches are compositionally biased toward low complexity: residues 1288 to 1303, 1320 to 1338, 1359 to 1386, and 1393 to 1454; these read SSSSSPWSSPALSSPS, DSTNNNNNNNNDTDSTSSN, NNSSNNQNNNNINNNNNNNNNNNNNNNN, and SNST…MNSN. The Protein kinase domain occupies 1476 to 1744; that stretch reads LFLIKKIGAG…AITSLYDDYI (269 aa). Residues 1482–1490 and Lys1503 each bind ATP; that span reads IGAGSFSKV. Residue Asp1597 is the Proton acceptor of the active site.

The protein belongs to the protein kinase superfamily. TKL Ser/Thr protein kinase family.

It carries out the reaction L-seryl-[protein] + ATP = O-phospho-L-seryl-[protein] + ADP + H(+). It catalyses the reaction L-threonyl-[protein] + ATP = O-phospho-L-threonyl-[protein] + ADP + H(+). In Dictyostelium discoideum (Social amoeba), this protein is Probable serine/threonine-protein kinase DDB_G0282963.